Consider the following 91-residue polypeptide: B3 domain-containing protein Os03g0164300 (91 aa).

The segment at residues Met-1–Lys-91 is a DNA-binding region (TF-B3).

It localises to the nucleus. This is B3 domain-containing protein Os03g0164300 from Oryza sativa subsp. japonica (Rice).